We begin with the raw amino-acid sequence, 1071 residues long: SLIT-ROBO Rho GTPase-activating protein 2 (1071 aa).

Residues 22-325 form the F-BAR domain; sequence KEIRAQLTEQ…AVENLDATSD (304 aa). Positions 181-203 are enriched in basic and acidic residues; it reads LKEAEKQEEKQIGKSVKQEDRQT. A disordered region spans residues 181 to 211; it reads LKEAEKQEEKQIGKSVKQEDRQTPRSPDSTA. Serine 206 is modified (phosphoserine). A coiled-coil region spans residues 363 to 401; that stretch reads QSELVQRRQQLQSRLSTLKIENEEVKKTMEATLQTIQDI. Phosphoserine is present on residues serine 427, serine 500, serine 691, serine 695, and serine 724. One can recognise a Rho-GAP domain in the interval 489-679; the sequence is ARRSSTVRKQ…TIIIQHENIF (191 aa). The segment at 703 to 726 is disordered; that stretch reads THGETISAEDSTQDVTAEHHTSDD. Residues 728–787 form the SH3 domain; sequence CEPIEAIAKFDYVGRTARELSFKKGASLLLYQRASDDWWEGRHNGIDGLIPHQYIVVQDT. 2 disordered regions span residues 794 to 820 and 835 to 936; these read RSSP…GASC and NKQR…NHRP. At serine 795 the chain carries Phosphoserine. Polar residues-rich tracts occupy residues 857-867, 874-885, and 897-907; these read LGSSLTDSSSP, RPSSQPIMSQNL, and GHGSLNSISRH. Position 916 is a phosphoserine (serine 916). Over residues 919–933 the composition is skewed to polar residues; the sequence is IRKTATAGRSKSFNN. Position 927 is a symmetric dimethylarginine; by PRMT5 (arginine 927). Phosphoserine is present on serine 930. A coiled-coil region spans residues 940-968; the sequence is EVIAQDIEATMNSALNELQELERQSSAKH. The disordered stretch occupies residues 983 to 1012; that stretch reads SPVVAPTSEPSSPLHTQLLKDPEPAFQRSA. Serine 990, serine 994, serine 1013, and serine 1027 each carry phosphoserine. Residues 1029 to 1071 form a disordered region; sequence KMAAPVKPPATRPKPTVFPKTNATSPGVNSSASPQSTDKSCTV. The segment covering 1047–1071 has biased composition (polar residues); it reads PKTNATSPGVNSSASPQSTDKSCTV.

Homodimer. Forms a heterooligomer with SRGAP1 and SRGAP3 through its F-BAR domain. Interacts (via SH3 domain) with GPHN. Interacts (via SH3 domain) with FMNL1 (activated by RAC1); regulates the actin filament severing activity of FMNL1 and actin dynamics. Interacts (via SH3 domain) with FMNL3. Interacts with RAC1; specifically stimulates RAC1 GTPase activity. Interacts (via F-BAR domain) with HOMER1. Interacts with ROBO1 and ROBO2. Interacts with FASLG. Interacts with PRMT5. Post-translationally, methylation at Arg-927 is required for the stimulation of cell migration, dimerization and localization at the plasma membrane protrusions.

It is found in the cell membrane. The protein resides in the cell projection. It localises to the dendritic spine. The protein localises to the postsynaptic density. Its subcellular location is the postsynaptic cell membrane. It is found in the lamellipodium. The protein resides in the cytoplasmic vesicle. It localises to the phagosome. The protein localises to the nucleus. Its subcellular location is the cytoplasm. It is found in the cytosol. Its function is as follows. Postsynaptic RAC1 GTPase activating protein (GAP) that plays a key role in neuronal morphogenesis and migration mainly during development of the cerebral cortex. Regulates excitatory and inhibitory synapse maturation and density in cortical pyramidal neurons. SRGAP2/SRGAP2A limits excitatory and inhibitory synapse density through its RAC1-specific GTPase activating activity, while it promotes maturation of both excitatory and inhibitory synapses through its ability to bind to the postsynaptic scaffolding protein HOMER1 at excitatory synapses, and the postsynaptic protein GPHN at inhibitory synapses. Mechanistically, acts by binding and deforming membranes, thereby regulating actin dynamics to regulate cell migration and differentiation. Promotes cell repulsion and contact inhibition of locomotion: localizes to protrusions with curved edges and controls the duration of RAC1 activity in contact protrusions. In non-neuronal cells, may also play a role in cell migration by regulating the formation of lamellipodia and filopodia. The sequence is that of SLIT-ROBO Rho GTPase-activating protein 2 from Rattus norvegicus (Rat).